The following is a 114-amino-acid chain: TYRO protein tyrosine kinase-binding protein (114 aa).

A signal peptide spans 1 to 27; the sequence is MGAPEPSWCFLFLPVLLTVGGLSPVQA. Over 28-42 the chain is Extracellular; that stretch reads QSDNYPGCECSSVSP. Residues 43–63 form a helical membrane-spanning segment; it reads GVLAGIVLGDLVLTLLIALAV. A Ca(2+)-binding site is contributed by aspartate 52. The Cytoplasmic portion of the chain corresponds to 64–114; it reads YSLGRLVSRGRGTADGTRKQHMAETESPYQELQGQRPEVYSDLNTQRQYYR. The tract at residues 72-114 is disordered; sequence RGRGTADGTRKQHMAETESPYQELQGQRPEVYSDLNTQRQYYR. The region spanning 81-109 is the ITAM domain; it reads RKQHMAETESPYQELQGQRPEVYSDLNTQ. Phosphotyrosine is present on residues tyrosine 92 and tyrosine 103. Polar residues predominate over residues 105–114; sequence DLNTQRQYYR.

The protein belongs to the TYROBP family. As to quaternary structure, homodimer; disulfide-linked. Homotrimer; disulfide-linked. Homotetramer; disulfide-linked. Homotrimers and homotetramers form when low levels of partner receptors are available and is competitive with assembly with interacting receptors. They may represent alternative oligomerization states or may be intermediates in the receptor assembly process. Binding of a metal cation aids in homooligomerization through coordination of the metal ion by the subunits of the oligomer. Interacts with TREM1. Interacts with TREM2. Interacts with CLECSF5. Interacts with CD300LB and CD300C2. Interacts with CD300E. Interacts (via ITAM domain) with SYK (via SH2 domains); activates SYK mediating neutrophils and macrophages integrin-mediated activation. Interacts with KLRC2. Interacts with CD300H. Interacts with KLRD1. Interacts with SIGLEC1. Following ligand binding by associated receptors, tyrosine phosphorylated in the ITAM domain which leads to activation of additional tyrosine kinases and subsequent cell activation.

The protein resides in the cell membrane. In terms of biological role, adapter protein which non-covalently associates with activating receptors found on the surface of a variety of immune cells to mediate signaling and cell activation following ligand binding by the receptors. TYROBP is tyrosine-phosphorylated in the ITAM domain following ligand binding by the associated receptors which leads to activation of additional tyrosine kinases and subsequent cell activation. Also has an inhibitory role in some cells. Non-covalently associates with activating receptors of the CD300 family to mediate cell activation. Also mediates cell activation through association with activating receptors of the CD200R family. Required for neutrophil activation mediated by integrin. Required for the activation of myeloid cells mediated by the CLEC5A/MDL1 receptor. Associates with natural killer (NK) cell receptors such as the KLRD1/KLRC2 heterodimer to mediate NK cell activation. Associates with TREM1 to mediate activation of neutrophils and monocytes. Associates with TREM2 on monocyte-derived dendritic cells to mediate up-regulation of chemokine receptor CCR7 and dendritic cell maturation and survival. PAssociation with TREM2 mediates cytokine-induced formation of multinucleated giant cells which are formed by the fusion of macrophages. Stabilizes the TREM2 C-terminal fragment (TREM2-CTF) produced by TREM2 ectodomain shedding which suppresses the release of pro-inflammatory cytokines. In microglia, required with TREM2 for phagocytosis of apoptotic neurons. Required with ITGAM/CD11B in microglia to control production of microglial superoxide ions which promote the neuronal apoptosis that occurs during brain development. Promotes pro-inflammatory responses in microglia following nerve injury which accelerates degeneration of injured neurons. ositively regulates the expression of the IRAK3/IRAK-M kinase and IL10 production by liver dendritic cells and inhibits their T cell allosimulatory ability. Negatively regulates B cell proliferation. Required for CSF1-mediated osteoclast cytoskeletal organization. Positively regulates multinucleation during osteoclast development. The sequence is that of TYRO protein tyrosine kinase-binding protein from Rattus norvegicus (Rat).